We begin with the raw amino-acid sequence, 126 residues long: Holo-[acyl-carrier-protein] synthase (126 aa).

Mg(2+)-binding residues include aspartate 8 and glutamate 57.

The protein belongs to the P-Pant transferase superfamily. AcpS family. Mg(2+) is required as a cofactor.

The protein resides in the cytoplasm. It catalyses the reaction apo-[ACP] + CoA = holo-[ACP] + adenosine 3',5'-bisphosphate + H(+). Functionally, transfers the 4'-phosphopantetheine moiety from coenzyme A to a Ser of acyl-carrier-protein. The protein is Holo-[acyl-carrier-protein] synthase of Geobacter sulfurreducens (strain ATCC 51573 / DSM 12127 / PCA).